Reading from the N-terminus, the 683-residue chain is DNA ligase 2 (683 aa).

NAD(+) is bound by residues 27–31 (DGEFD), 76–77 (SL), and glutamate 106. The active-site N6-AMP-lysine intermediate is the lysine 108. NAD(+)-binding residues include arginine 129, glutamate 169, lysine 285, and lysine 309. The Zn(2+) site is built by cysteine 403, cysteine 406, cysteine 422, and cysteine 428. In terms of domain architecture, BRCT spans 592 to 681 (SIERTLEGLS…PAAVAAEEPE (90 aa)).

Belongs to the NAD-dependent DNA ligase family. LigA subfamily. The cofactor is Mg(2+). It depends on Mn(2+) as a cofactor.

It carries out the reaction NAD(+) + (deoxyribonucleotide)n-3'-hydroxyl + 5'-phospho-(deoxyribonucleotide)m = (deoxyribonucleotide)n+m + AMP + beta-nicotinamide D-nucleotide.. Its function is as follows. DNA ligase that catalyzes the formation of phosphodiester linkages between 5'-phosphoryl and 3'-hydroxyl groups in double-stranded DNA using NAD as a coenzyme and as the energy source for the reaction. It is essential for DNA replication and repair of damaged DNA. This chain is DNA ligase 2, found in Nocardia farcinica (strain IFM 10152).